A 308-amino-acid chain; its full sequence is HPr kinase/phosphorylase (308 aa).

Catalysis depends on residues His138 and Lys159. Residue Gly153–Ser160 participates in ATP binding. Residue Ser160 coordinates Mg(2+). The active-site Proton acceptor; for phosphorylation activity. Proton donor; for dephosphorylation activity is Asp177. The tract at residues Leu201 to Asp210 is important for the catalytic mechanism of both phosphorylation and dephosphorylation. Glu202 provides a ligand contact to Mg(2+). Arg243 is a catalytic residue. The segment at Gln264–Arg269 is important for the catalytic mechanism of dephosphorylation.

This sequence belongs to the HPrK/P family. Homohexamer. Mg(2+) serves as cofactor.

The catalysed reaction is [HPr protein]-L-serine + ATP = [HPr protein]-O-phospho-L-serine + ADP + H(+). The enzyme catalyses [HPr protein]-O-phospho-L-serine + phosphate + H(+) = [HPr protein]-L-serine + diphosphate. Functionally, catalyzes the ATP- as well as the pyrophosphate-dependent phosphorylation of a specific serine residue in HPr, a phosphocarrier protein of the phosphoenolpyruvate-dependent sugar phosphotransferase system (PTS). HprK/P also catalyzes the pyrophosphate-producing, inorganic phosphate-dependent dephosphorylation (phosphorolysis) of seryl-phosphorylated HPr (P-Ser-HPr). This Bordetella pertussis (strain Tohama I / ATCC BAA-589 / NCTC 13251) protein is HPr kinase/phosphorylase.